The primary structure comprises 167 residues: Lipoprotein signal peptidase (167 aa).

Helical transmembrane passes span 8 to 28, 46 to 66, 68 to 88, and 101 to 121; these read TFLTLLLLASIDWVSKLVVLL, WGHFSFLIIPSFNEGAAFGLF, QYKIPLLIFRVCVILGLALFL, and VALTLILAGALGNVGDILLYG. Residues Asp-125 and Asp-143 contribute to the active site. A helical membrane pass occupies residues 139 to 159; sequence FNLADAFISIGTLLLIGHLYF.

This sequence belongs to the peptidase A8 family.

The protein resides in the cell inner membrane. The enzyme catalyses Release of signal peptides from bacterial membrane prolipoproteins. Hydrolyzes -Xaa-Yaa-Zaa-|-(S,diacylglyceryl)Cys-, in which Xaa is hydrophobic (preferably Leu), and Yaa (Ala or Ser) and Zaa (Gly or Ala) have small, neutral side chains.. It participates in protein modification; lipoprotein biosynthesis (signal peptide cleavage). In terms of biological role, this protein specifically catalyzes the removal of signal peptides from prolipoproteins. This is Lipoprotein signal peptidase from Chlamydia trachomatis serovar A (strain ATCC VR-571B / DSM 19440 / HAR-13).